The following is a 1125-amino-acid chain: Probable inorganic carbon transporter subunit DabA (1125 aa).

Residues cysteine 578, aspartate 580, histidine 769, and cysteine 784 each coordinate Zn(2+). The segment at 1106–1125 is disordered; that stretch reads SDPRPPALVEPKQTETHHAA.

Belongs to the inorganic carbon transporter (TC 9.A.2) DabA family. As to quaternary structure, forms a complex with DabB. Zn(2+) is required as a cofactor.

It is found in the cell inner membrane. Functionally, part of an energy-coupled inorganic carbon pump. The sequence is that of Probable inorganic carbon transporter subunit DabA from Nitrosococcus oceani (strain ATCC 19707 / BCRC 17464 / JCM 30415 / NCIMB 11848 / C-107).